The sequence spans 139 residues: Metallothiol transferase FosB (139 aa).

Residues 4–119 (GINHITYSVS…DGHKLELHTG (116 aa)) enclose the VOC domain. Mg(2+) contacts are provided by H7, H66, and E115. Catalysis depends on E115, which acts as the Proton donor/acceptor.

The protein belongs to the fosfomycin resistance protein family. FosB subfamily. In terms of assembly, homodimer. It depends on Mg(2+) as a cofactor.

The protein resides in the cytoplasm. Metallothiol transferase which confers resistance to fosfomycin by catalyzing the addition of a thiol cofactor to fosfomycin. L-cysteine is probably the physiological thiol donor. The protein is Metallothiol transferase FosB of Staphylococcus epidermidis.